The chain runs to 343 residues: Ribosomal RNA small subunit methyltransferase C (343 aa).

The protein belongs to the methyltransferase superfamily. RsmC family. In terms of assembly, monomer.

The protein resides in the cytoplasm. The catalysed reaction is guanosine(1207) in 16S rRNA + S-adenosyl-L-methionine = N(2)-methylguanosine(1207) in 16S rRNA + S-adenosyl-L-homocysteine + H(+). Specifically methylates the guanine in position 1207 of 16S rRNA in the 30S particle. This chain is Ribosomal RNA small subunit methyltransferase C, found in Shigella boydii serotype 4 (strain Sb227).